A 265-amino-acid chain; its full sequence is Protein Pars_0096 (265 aa).

It belongs to the CinA family.

This Pyrobaculum arsenaticum (strain DSM 13514 / JCM 11321 / PZ6) protein is Protein Pars_0096.